The primary structure comprises 263 residues: MYSLKDLCIQVAQKHVHDIDDIGDCPFELVKPILEKARPEHLIDLEEKSPHLKVDTQPLWKDHVLRDFGLELQKRTILNNIDDWRGLYGKLKKKRNAHYNVASAKLRSAYTKLEQSKQNKRIVPLEREPRAARPPKRPRPMSNYCPKSSLMARAKSDFLKKASATRHIVSATSSSRSFPQLHPLGRSSSNATNTSTKRPLTSNTYPSIPLPPKSFTSQNFKSFNAVKTQPSSSSSPSISRPTSFPMSFFPNPSRFSSQVPKRI.

Disordered regions lie at residues 112-147 and 170-263; these read KLEQ…YCPK and SATS…PKRI. Composition is skewed to polar residues over residues 186–206 and 214–229; these read RSSS…NTYP and SFTS…VKTQ. Low complexity predominate over residues 230-245; sequence PSSSSSPSISRPTSFP. Over residues 253–263 the composition is skewed to polar residues; that stretch reads SRFSSQVPKRI.

Belongs to the ELA1 family. As to quaternary structure, heterodimer with elc1. Component of a CRL3 E3 ubiquitin ligase complex consisting of a cullin, the linker protein elc1, the substrate receptor pof4/ela1, and the RING protein rbx1. Interacts with skp1.

Functionally, as part of the CRL3 E3 ubiquitin ligase complex; polyubiquitylates monoubiquitylated RNA polymerase II subunit rpb1 to trigger its proteolysis; plays a role in global genomic repair. The sequence is that of Elongin-A (pof4) from Schizosaccharomyces pombe (strain 972 / ATCC 24843) (Fission yeast).